Consider the following 531-residue polypeptide: Calcium-dependent protein kinase 21 (531 aa).

Basic residues predominate over residues 1–10; the sequence is MGCFSSKHRK. The tract at residues 1-62 is disordered; that stretch reads MGCFSSKHRK…STPSSNPVSV (62 aa). A lipid anchor (N-myristoyl glycine) is attached at Gly2. Polar residues predominate over residues 48–60; it reads IHQQISTPSSNPV. In terms of domain architecture, Protein kinase spans 80–338; the sequence is YSLGKELGRG…AAQVLEHPWI (259 aa). ATP-binding positions include 86 to 94 and Lys109; that span reads LGRGQFGIT. Catalysis depends on Asp204, which acts as the Proton acceptor. Residue Ser244 is modified to Phosphoserine. Residues 343–373 are autoinhibitory domain; that stretch reads APDKPIDSAVLSRMKQFRAMNKLKKLALKVI. EF-hand domains lie at 380 to 415, 416 to 451, 452 to 487, and 488 to 522; these read EEIK…LGSR, LSET…RYKL, DRDE…YGMG, and DEAS…GSTQ. Ca(2+) is bound by residues Asp393, Asp395, Ser397, Thr399, Glu404, Asp429, Asp431, Asn433, Thr435, Glu440, Asp465, Asp467, Ser469, His471, Glu476, Asp500, Asp502, Asp504, Arg506, and Glu511.

This sequence belongs to the protein kinase superfamily. Ser/Thr protein kinase family. CDPK subfamily. In terms of assembly, interacts with SLAC1 and ABI1.

The protein localises to the cell membrane. It catalyses the reaction L-seryl-[protein] + ATP = O-phospho-L-seryl-[protein] + ADP + H(+). The enzyme catalyses L-threonyl-[protein] + ATP = O-phospho-L-threonyl-[protein] + ADP + H(+). Activated by calcium. Autophosphorylation may play an important role in the regulation of the kinase activity. Functionally, may play a role in signal transduction pathways that involve calcium as a second messenger. Mediates the phosphorylation and activation of the S-type anion efflux channel SLAC1. The chain is Calcium-dependent protein kinase 21 (CPK21) from Arabidopsis thaliana (Mouse-ear cress).